Consider the following 203-residue polypeptide: MISRADPLTARQAEILDFIRHTVESEGRPPTRAEICTAFGFRSPNAAETHLRTLAAKGAIVLEEGRARGIRLVEALGLPLVGHVAAGRPMLAVEHIEARYQIDSALFSPRADYLLRVRGMSMRDAGIIDSDLLAVHRTPQVRAGQVVVARLEDEVTVKTFTREGPIVRLLPANPDFEPIVVDTRHQALDIEGIAVGLVRNGSR.

Residues Arg-32 to Arg-52 constitute a DNA-binding region (H-T-H motif). Residues Ser-121 and Lys-158 each act as for autocatalytic cleavage activity in the active site.

Belongs to the peptidase S24 family. Homodimer.

The catalysed reaction is Hydrolysis of Ala-|-Gly bond in repressor LexA.. Functionally, represses a number of genes involved in the response to DNA damage (SOS response), including recA and lexA. In the presence of single-stranded DNA, RecA interacts with LexA causing an autocatalytic cleavage which disrupts the DNA-binding part of LexA, leading to derepression of the SOS regulon and eventually DNA repair. This chain is LexA repressor, found in Aromatoleum aromaticum (strain DSM 19018 / LMG 30748 / EbN1) (Azoarcus sp. (strain EbN1)).